The sequence spans 166 residues: Peptidyl-prolyl cis-trans isomerase cyp18 (166 aa).

A PPIase cyclophilin-type domain is found at 2–164; it reads STVELNTSAG…QPVVIESAKI (163 aa).

The protein belongs to the cyclophilin-type PPIase family. Monomer.

Its subcellular location is the cytoplasm. It carries out the reaction [protein]-peptidylproline (omega=180) = [protein]-peptidylproline (omega=0). Inhibition by cyclosporin A with a Ki of 21 mu-mol. Its function is as follows. PPIases accelerate the folding of proteins. It catalyzes the cis-trans isomerization of proline imidic peptide bonds in oligopeptides. The sequence is that of Peptidyl-prolyl cis-trans isomerase cyp18 from Streptomyces antibioticus.